We begin with the raw amino-acid sequence, 767 residues long: Ribonucleoside-diphosphate reductase subunit alpha (767 aa).

A disordered region spans residues 1-30 (MHPTLISAPISSSANDAHAGTSQGSHQGHR). The span at 9-26 (PISSSANDAHAGTSQGSH) shows a compositional bias: polar residues. In terms of domain architecture, ATP-cone spans 31 to 120 (IQVIRRDGSS…VWSLWKDTLV (90 aa)). Residues Thr-228, 243-244 (SC), Gly-272, 460-464 (NLCCE), and 631-635 (PNTSS) contribute to the substrate site. Cys-244 and Cys-478 are oxidised to a cystine. The active-site Proton acceptor is Asn-460. The active-site Cysteine radical intermediate is the Cys-462. Catalysis depends on Glu-464, which acts as the Proton acceptor.

The protein belongs to the ribonucleoside diphosphate reductase large chain family. Tetramer of two alpha and two beta subunits.

The catalysed reaction is a 2'-deoxyribonucleoside 5'-diphosphate + [thioredoxin]-disulfide + H2O = a ribonucleoside 5'-diphosphate + [thioredoxin]-dithiol. Its activity is regulated as follows. Under complex allosteric control mediated by deoxynucleoside triphosphates and ATP binding. The type of nucleotide bound at the specificity site determines substrate preference. It seems probable that ATP makes the enzyme reduce CDP and UDP, dGTP favors ADP reduction and dTTP favors GDP reduction. Provides the precursors necessary for DNA synthesis. Catalyzes the biosynthesis of deoxyribonucleotides from the corresponding ribonucleotides. The chain is Ribonucleoside-diphosphate reductase subunit alpha (nrdA) from Synechocystis sp. (strain ATCC 27184 / PCC 6803 / Kazusa).